The chain runs to 98 residues: Small ribosomal subunit protein bS21B (98 aa).

Residues 61–98 (KLQREGLLPMKPKPVFGAGAGGERGGRGGPGAGPRGPR) form a disordered region. Residues 78 to 98 (AGAGGERGGRGGPGAGPRGPR) are compositionally biased toward gly residues.

The protein belongs to the bacterial ribosomal protein bS21 family.

This chain is Small ribosomal subunit protein bS21B, found in Bradyrhizobium diazoefficiens (strain JCM 10833 / BCRC 13528 / IAM 13628 / NBRC 14792 / USDA 110).